Here is a 317-residue protein sequence, read N- to C-terminus: Pinoresinol reductase 2 (317 aa).

Residues Thr-18, Ser-20, Leu-21, Arg-41, Lys-50, Ser-90, Gly-91, Arg-95, Asn-98, and Ser-121 each coordinate NADP(+). Residue Met-125 participates in (-)-pinoresinol binding. Lys-144 and Phe-166 together coordinate NADP(+). Lys-144 acts as the Proton acceptor in catalysis. Gly-178 contributes to the (-)-pinoresinol binding site.

Belongs to the NmrA-type oxidoreductase family. Isoflavone reductase subfamily. As to quaternary structure, forms homodimers. In terms of tissue distribution, expressed in roots. Detected in stems.

The enzyme catalyses (-)-lariciresinol + NADP(+) = (-)-pinoresinol + NADPH + H(+). Functionally, reductase involved in lignan biosynthesis. Unlike conventional pinoresinol reductases that can reduce both pinoresinol and lariciresinol, PRR2 shows a strict substrate selectivity for (-)-pinoresinol. No activity with (+)-pinoresinol or lariciresinol. Abstracts the 4R-hydride from the NADPH cofactor during catalysis. The polypeptide is Pinoresinol reductase 2 (Arabidopsis thaliana (Mouse-ear cress)).